A 153-amino-acid polypeptide reads, in one-letter code: MALVFVYGTLKRGQPNHRVLRDGAHGSAAFRARGRTLEPYPLVIAGEHNIPWLLHLPGSGRLVEGEVYAVDERMLRFLDDFESCPALYQRTVLRVQLLEDRAPGAEEPPAPTAVQCFVYSRATFPPEWAQLPHHDSYDSEGPHGLRYNPRENR.

Position 7 to 10 (Tyr-7 to Leu-10) interacts with substrate. Glu-82 serves as the catalytic Proton acceptor. The tract at residues Gln-130–Arg-153 is disordered. A compositionally biased stretch (basic and acidic residues) spans Pro-132–Arg-153.

Belongs to the gamma-glutamylcyclotransferase family. Monomer.

It catalyses the reaction epsilon-(gamma-L-glutamyl)-L-lysine = 5-oxo-L-proline + L-lysine. In terms of biological role, contributes to degradation of proteins cross-linked by transglutaminases by degrading the cross-link between a lysine and a glutamic acid residue. Catalyzes the formation of 5-oxo-L-proline from L-gamma-glutamyl-L-epsilon-lysine. Inactive with L-gamma-glutamyl-alpha-amino acid substrates such as L-gamma-glutamyl-L-alpha-cysteine and L-gamma-glutamyl-L-alpha-alanine. This is Gamma-glutamylaminecyclotransferase (GGACT) from Homo sapiens (Human).